The following is a 449-amino-acid chain: MANVVENLGKLERRVTISLPKDVVQKEIDARIQKLAKNVRMPGFRPGKVPLKMVAQQYAGQVEAEVLSDKIGQEFFTISRSENLRVAGQPSFAPKQDAAQEGAYAFDATFEVYPEVKIGDLATAEVERSTTTIGDAEIDRTLDILRKQRVHFHARGEGGEHGDGGADTSAQNGDRVTVDFVGKIDGVAFQGGTAEDFVFVLGEGRMLPEFETAALGLKTGEAREFDLKFPDDYHGKDVAGKTAQFTVTMKKVEWPHLPAIDADFAKSLGIEDGDLTKMREEIKENLGREAKRRTQSIVKNQVMDALLKISELDVPKALIEQDQQRLVEMARQDLAQRGVPNAKDAPIPVEMFAEQAERRVKLGLVLAELVKANGLEAKPEQIRAEVDEFAKSYEDPKEVVRWYYSNQQRLAEMEAFVVESNVVDFVLGKAKVTDKEVSFEALASATAQA.

Residues 173–258 (GDRVTVDFVG…MKKVEWPHLP (86 aa)) enclose the PPIase FKBP-type domain.

This sequence belongs to the FKBP-type PPIase family. Tig subfamily.

It is found in the cytoplasm. It carries out the reaction [protein]-peptidylproline (omega=180) = [protein]-peptidylproline (omega=0). Functionally, involved in protein export. Acts as a chaperone by maintaining the newly synthesized protein in an open conformation. Functions as a peptidyl-prolyl cis-trans isomerase. This chain is Trigger factor, found in Burkholderia thailandensis (strain ATCC 700388 / DSM 13276 / CCUG 48851 / CIP 106301 / E264).